Here is a 105-residue protein sequence, read N- to C-terminus: uncharacterized protein (105 aa).

Positions Met1–Val101 constitute a Hcy-binding domain.

This is an uncharacterized protein from Saccharomyces cerevisiae (strain ATCC 204508 / S288c) (Baker's yeast).